The chain runs to 390 residues: NADH-quinone oxidoreductase subunit D (390 aa).

Belongs to the complex I 49 kDa subunit family. In terms of assembly, NDH-1 is composed of 14 different subunits. Subunits NuoB, C, D, E, F, and G constitute the peripheral sector of the complex.

It is found in the cell membrane. The catalysed reaction is a quinone + NADH + 5 H(+)(in) = a quinol + NAD(+) + 4 H(+)(out). Its function is as follows. NDH-1 shuttles electrons from NADH, via FMN and iron-sulfur (Fe-S) centers, to quinones in the respiratory chain. The immediate electron acceptor for the enzyme in this species is believed to be ubiquinone. Couples the redox reaction to proton translocation (for every two electrons transferred, four hydrogen ions are translocated across the cytoplasmic membrane), and thus conserves the redox energy in a proton gradient. The polypeptide is NADH-quinone oxidoreductase subunit D (Wolbachia pipientis subsp. Culex pipiens (strain wPip)).